Consider the following 247-residue polypeptide: Homeobox-leucine zipper protein HOX17 (247 aa).

The tract at residues 58–81 (ERAGLRGGGGSDEEDGGCGIDGSR) is disordered. Residues 79-138 (GSRKKLRLSKDQSAVLEDSFREHPTLNPRQKATLAQQLGLRPRQVEVWFQNRRARTKLKQ) constitute a DNA-binding region (homeobox). A leucine-zipper region spans residues 137-182 (KQTEVDCEFLKRCCETLTEENRRLQKEVQELRALKLVSPHLYMNMS).

The protein belongs to the HD-ZIP homeobox family. Class II subfamily. In terms of tissue distribution, expressed in seedlings, roots, stems, leaf sheaths and blades and panicles.

The protein localises to the nucleus. Functionally, probable transcription factor. The polypeptide is Homeobox-leucine zipper protein HOX17 (HOX17) (Oryza sativa subsp. japonica (Rice)).